We begin with the raw amino-acid sequence, 348 residues long: Dihydroorotase (348 aa).

Zn(2+) is bound by residues histidine 17 and histidine 19. Residues 19-21 and asparagine 45 contribute to the substrate site; that span reads HLR. Residues lysine 103, histidine 140, and histidine 178 each contribute to the Zn(2+) site. At lysine 103 the chain carries N6-carboxylysine. Substrate is bound at residue histidine 140. Leucine 223 serves as a coordination point for substrate. Aspartate 251 contributes to the Zn(2+) binding site. Residue aspartate 251 is part of the active site. Substrate contacts are provided by histidine 255 and alanine 267.

The protein belongs to the metallo-dependent hydrolases superfamily. DHOase family. Class II DHOase subfamily. Homodimer. Zn(2+) is required as a cofactor.

It catalyses the reaction (S)-dihydroorotate + H2O = N-carbamoyl-L-aspartate + H(+). The protein operates within pyrimidine metabolism; UMP biosynthesis via de novo pathway; (S)-dihydroorotate from bicarbonate: step 3/3. Catalyzes the reversible cyclization of carbamoyl aspartate to dihydroorotate. This chain is Dihydroorotase, found in Salmonella paratyphi B (strain ATCC BAA-1250 / SPB7).